A 336-amino-acid chain; its full sequence is Probable allantoicase (336 aa).

The protein belongs to the allantoicase family.

The catalysed reaction is allantoate + H2O = (S)-ureidoglycolate + urea. The protein operates within nitrogen metabolism; (S)-allantoin degradation; (S)-ureidoglycolate from allantoate (aminidohydrolase route): step 1/1. This chain is Probable allantoicase, found in Acinetobacter baumannii (strain ATCC 17978 / DSM 105126 / CIP 53.77 / LMG 1025 / NCDC KC755 / 5377).